A 151-amino-acid polypeptide reads, in one-letter code: Probable transcriptional regulator syrB3 (151 aa).

The segment at 1 to 65 (MVDESNAGPV…QERSEKLRLI (65 aa)) is disordered. Residues 7–23 (AGPVAPAVVADAEVKAP) are compositionally biased toward low complexity. The span at 52–65 (GYSEQERSEKLRLI) shows a compositional bias: basic and acidic residues.

The protein belongs to the SyrB family.

This chain is Probable transcriptional regulator syrB3 (syrB3), found in Rhizobium meliloti (strain 1021) (Ensifer meliloti).